The following is a 622-amino-acid chain: TAF6-like RNA polymerase II p300/CBP-associated factor-associated factor 65 kDa subunit 6L (622 aa).

Disordered stretches follow at residues 403 to 430 (QESS…GPED) and 457 to 546 (GTGQ…TRDV). Phosphoserine is present on residues Ser-495 and Ser-501. Positions 511–522 (ASASGPAASESR) are enriched in low complexity. Asymmetric dimethylarginine is present on residues Arg-555, Arg-561, and Arg-593.

It belongs to the TAF6 family. In terms of assembly, the PCAF complex is composed of a number of TBP-associated factors (TAFS), such as TAF5, TAF5L, TAF6, TAF6L, TAF9, TAF10 and TAF12, PCAF, and also PCAF-associated factors (PAFs), such as TADA2L/ADA2, TADA3L/ADA3 and SPT3. Component of the STAGA transcription coactivator-HAT complex, at least composed of SUPT3H, GCN5L2, TAF5L, TAF6L, SUPT7L, TADA3L, TAD1L, TAF10, TAF12, TRRAP and TAF9.

The protein resides in the nucleus. Functions as a component of the PCAF complex. The PCAF complex is capable of efficiently acetylating histones in a nucleosomal context. The PCAF complex could be considered as the human version of the yeast SAGA complex. With TAF5L, acts as an epigenetic regulator essential for somatic reprogramming. Regulates target genes through H3K9ac deposition and MYC recruitment which trigger MYC regulatory network to orchestrate gene expression programs to control embryonic stem cell state. Functions with MYC to activate target gene expression through RNA polymerase II pause release. The polypeptide is TAF6-like RNA polymerase II p300/CBP-associated factor-associated factor 65 kDa subunit 6L (Homo sapiens (Human)).